The following is a 124-amino-acid chain: Small ribosomal subunit protein bS16 (124 aa).

Residues 81–90 (LKKRPARNNP) are compositionally biased toward basic residues. A disordered region spans residues 81–124 (LKKRPARNNPHKGEPGKKAQERIAAAKQAAEDAAAAAEADSASE). The span at 91–101 (HKGEPGKKAQE) shows a compositional bias: basic and acidic residues. The span at 102 to 124 (RIAAAKQAAEDAAAAAEADSASE) shows a compositional bias: low complexity.

It belongs to the bacterial ribosomal protein bS16 family.

The polypeptide is Small ribosomal subunit protein bS16 (Bartonella tribocorum (strain CIP 105476 / IBS 506)).